The primary structure comprises 387 residues: Pepsin-3 (387 aa).

An N-terminal signal peptide occupies residues 1-15 (MKWLLLLGLLALSEC). Residues 16 to 59 (IIHKVPLVRKKSLRKNLIEKGLLKDYLKTHTPNLATKYLPKAAF) constitute a propeptide, activation peptide. A Peptidase A1 domain is found at 75 to 384 (YFGTIGIGTP…DRANNQLGLA (310 aa)). Aspartate 93 is a catalytic residue. Cystine bridges form between cysteine 106–cysteine 111 and cysteine 267–cysteine 271. The active site involves aspartate 276. Residues cysteine 310 and cysteine 343 are joined by a disulfide bond.

It belongs to the peptidase A1 family.

Its subcellular location is the secreted. It catalyses the reaction Preferential cleavage: hydrophobic, preferably aromatic, residues in P1 and P1' positions. Cleaves 1-Phe-|-Val-2, 4-Gln-|-His-5, 13-Glu-|-Ala-14, 14-Ala-|-Leu-15, 15-Leu-|-Tyr-16, 16-Tyr-|-Leu-17, 23-Gly-|-Phe-24, 24-Phe-|-Phe-25 and 25-Phe-|-Tyr-26 bonds in the B chain of insulin.. Shows particularly broad specificity; although bonds involving phenylalanine and leucine are preferred, many others are also cleaved to some extent. The protein is Pepsin-3 of Oryctolagus cuniculus (Rabbit).